Here is a 416-residue protein sequence, read N- to C-terminus: MMIKLIATPSNALVDEPVSIRATGLPPSQIVTIKATVKDENDNVFQSQAFYKTNEAGEVDLEKTPALGGDYVGVHPMGLFFSLKPKKAFHRLMKKDVMNSPFCICLDLYDSVNWLETVRIPSKASQRVQRWFVGPGVKREQIQEGRVRGALFLPPGKGPFPGIIDLFGVIGGLVEFRASLLASHGFAVLALAYFAYKDLPEKLQEVDLEYFEEAANFLLSHPKIQQPGIGVISTSKGAEIGLAMACYLKQVIATVCINGATTTTAVPLRYQDLVVTPIQQALERMEVHVSGAVCFRHTTQYLQNKNILPVEKAQGKILFIVGENDELLDSKLHAQRAMDRLRRHGRSSGRMLAYPGAGHLIEPPYSPLCFASWQPVLGRPMCFGGDLMAHAAAQEHSWREIQKFFRKHLLQSGSKL.

A Phosphoserine modification is found at S125. Catalysis depends on charge relay system residues S235, D325, and H359. Phosphoserine is present on S414. The Microbody targeting signal motif lies at 414–416 (SKL).

Belongs to the C/M/P thioester hydrolase family. Expressed mainly in liver and kidney with low levels in adrenal and little or no expression in other tissues.

It localises to the peroxisome. It catalyses the reaction tetracosanoyl-CoA + taurine = N-tetracosanoyl-taurine + CoA + H(+). The enzyme catalyses eicosanoyl-CoA + taurine = N-eicosanoyl-taurine + CoA + H(+). It carries out the reaction taurine + octadecanoyl-CoA = N-octadecanoyl-taurine + CoA + H(+). The catalysed reaction is taurine + hexadecanoyl-CoA = N-hexadecanoyl-taurine + CoA + H(+). It catalyses the reaction tetradecanoyl-CoA + taurine = N-tetradecanoyl-taurine + CoA + H(+). The enzyme catalyses dodecanoyl-CoA + taurine = N-dodecanoyl-taurine + CoA + H(+). Functionally, acyltransferase which efficiently conjugates very long-chain and long-chain fatty acids to taurine. Shows no conjugation activity in the presence of glycine. This is Acyl-coenzyme A amino acid N-acyltransferase 1 from Mus musculus (Mouse).